The sequence spans 200 residues: Recombination protein RecR (200 aa).

The C4-type zinc-finger motif lies at 57 to 72 (CRLCRTLTEEELCPQC). A Toprim domain is found at 80–175 (TLLCVVEGPT…VASRIAHGVP (96 aa)).

Belongs to the RecR family.

In terms of biological role, may play a role in DNA repair. It seems to be involved in an RecBC-independent recombinational process of DNA repair. It may act with RecF and RecO. This chain is Recombination protein RecR, found in Pseudomonas syringae pv. tomato (strain ATCC BAA-871 / DC3000).